The chain runs to 83 residues: Large ribosomal subunit protein bL31 (83 aa).

The protein belongs to the bacterial ribosomal protein bL31 family. Type A subfamily. In terms of assembly, part of the 50S ribosomal subunit.

Its function is as follows. Binds the 23S rRNA. This is Large ribosomal subunit protein bL31 from Synechococcus sp. (strain CC9605).